Reading from the N-terminus, the 483-residue chain is Glycogen synthase (483 aa).

K15 lines the ADP-alpha-D-glucose pocket.

Belongs to the glycosyltransferase 1 family. Bacterial/plant glycogen synthase subfamily.

It carries out the reaction [(1-&gt;4)-alpha-D-glucosyl](n) + ADP-alpha-D-glucose = [(1-&gt;4)-alpha-D-glucosyl](n+1) + ADP + H(+). Its pathway is glycan biosynthesis; glycogen biosynthesis. Functionally, synthesizes alpha-1,4-glucan chains using ADP-glucose. This is Glycogen synthase from Alkalilimnicola ehrlichii (strain ATCC BAA-1101 / DSM 17681 / MLHE-1).